The chain runs to 476 residues: Siroheme synthase (476 aa).

The segment at 1 to 207 (MTANVLFPLF…QRHAEAEAVL (207 aa)) is precorrin-2 dehydrogenase /sirohydrochlorin ferrochelatase. NAD(+)-binding positions include 25–26 (KV) and 46–47 (PS). Ser132 carries the phosphoserine modification. A uroporphyrinogen-III C-methyltransferase region spans residues 220-476 (GSVTLVGAGA…SAPCPPALIL (257 aa)). Asp252 acts as the Proton acceptor in catalysis. The active-site Proton donor is the Lys274. S-adenosyl-L-methionine-binding positions include 305–307 (GGD), Val310, 335–336 (TA), Met387, and Gly416.

This sequence in the N-terminal section; belongs to the precorrin-2 dehydrogenase / sirohydrochlorin ferrochelatase family. The protein in the C-terminal section; belongs to the precorrin methyltransferase family.

It catalyses the reaction uroporphyrinogen III + 2 S-adenosyl-L-methionine = precorrin-2 + 2 S-adenosyl-L-homocysteine + H(+). It carries out the reaction precorrin-2 + NAD(+) = sirohydrochlorin + NADH + 2 H(+). The catalysed reaction is siroheme + 2 H(+) = sirohydrochlorin + Fe(2+). It functions in the pathway cofactor biosynthesis; adenosylcobalamin biosynthesis; precorrin-2 from uroporphyrinogen III: step 1/1. Its pathway is cofactor biosynthesis; adenosylcobalamin biosynthesis; sirohydrochlorin from precorrin-2: step 1/1. The protein operates within porphyrin-containing compound metabolism; siroheme biosynthesis; precorrin-2 from uroporphyrinogen III: step 1/1. It participates in porphyrin-containing compound metabolism; siroheme biosynthesis; siroheme from sirohydrochlorin: step 1/1. It functions in the pathway porphyrin-containing compound metabolism; siroheme biosynthesis; sirohydrochlorin from precorrin-2: step 1/1. In terms of biological role, multifunctional enzyme that catalyzes the SAM-dependent methylations of uroporphyrinogen III at position C-2 and C-7 to form precorrin-2 via precorrin-1. Then it catalyzes the NAD-dependent ring dehydrogenation of precorrin-2 to yield sirohydrochlorin. Finally, it catalyzes the ferrochelation of sirohydrochlorin to yield siroheme. The polypeptide is Siroheme synthase (Xylella fastidiosa (strain 9a5c)).